The sequence spans 289 residues: Bifunctional protein FolD (289 aa).

Residues 165–167 (GAS) and serine 190 contribute to the NADP(+) site.

This sequence belongs to the tetrahydrofolate dehydrogenase/cyclohydrolase family. As to quaternary structure, homodimer.

The catalysed reaction is (6R)-5,10-methylene-5,6,7,8-tetrahydrofolate + NADP(+) = (6R)-5,10-methenyltetrahydrofolate + NADPH. It catalyses the reaction (6R)-5,10-methenyltetrahydrofolate + H2O = (6R)-10-formyltetrahydrofolate + H(+). It functions in the pathway one-carbon metabolism; tetrahydrofolate interconversion. Its function is as follows. Catalyzes the oxidation of 5,10-methylenetetrahydrofolate to 5,10-methenyltetrahydrofolate and then the hydrolysis of 5,10-methenyltetrahydrofolate to 10-formyltetrahydrofolate. The polypeptide is Bifunctional protein FolD (Ralstonia pickettii (strain 12J)).